A 601-amino-acid polypeptide reads, in one-letter code: Aspartate--tRNA ligase (601 aa).

L-aspartate is bound at residue glutamate 183. The tract at residues glutamine 207–lysine 210 is aspartate. Residue arginine 229 participates in L-aspartate binding. Residues arginine 229–glutamate 231 and glutamine 238 each bind ATP. Histidine 457 lines the L-aspartate pocket. Glutamate 497 contributes to the ATP binding site. Residue arginine 504 participates in L-aspartate binding. Glycine 549–arginine 552 provides a ligand contact to ATP.

Belongs to the class-II aminoacyl-tRNA synthetase family. Type 1 subfamily. In terms of assembly, homodimer.

Its subcellular location is the cytoplasm. The enzyme catalyses tRNA(Asp) + L-aspartate + ATP = L-aspartyl-tRNA(Asp) + AMP + diphosphate. Catalyzes the attachment of L-aspartate to tRNA(Asp) in a two-step reaction: L-aspartate is first activated by ATP to form Asp-AMP and then transferred to the acceptor end of tRNA(Asp). The chain is Aspartate--tRNA ligase from Leptospira interrogans serogroup Icterohaemorrhagiae serovar Lai (strain 56601).